The primary structure comprises 780 residues: Chromatin structure-remodeling complex subunit rsc9 (780 aa).

Residues 20-112 (TNENDSFLSL…YLISWEIHDH (93 aa)) form the ARID domain. Thr-230 bears the Phosphothreonine mark. The RFX-type winged-helix DNA-binding region spans 530–609 (SVKWMRCCFE…YVINGIKRRK (80 aa)). Ser-696 bears the Phosphoserine mark.

Belongs to the RSC9 family. As to quaternary structure, component of the RSC complex composed of at least arp9, arp42, rsc1, rsc4, rsc7, rsc9, rsc58, sfh1, snf21, ssr1, ssr2, ssr3 and ssr4. The complex interacts with histone and histone variant components of centromeric chromatin.

It localises to the cytoplasm. Its subcellular location is the nucleus. In terms of biological role, component of the chromatin structure remodeling complex (RSC), which is involved in transcription regulation and nucleosome positioning. Controls particularly membrane and organelle development genes. The protein is Chromatin structure-remodeling complex subunit rsc9 (rsc9) of Schizosaccharomyces pombe (strain 972 / ATCC 24843) (Fission yeast).